We begin with the raw amino-acid sequence, 233 residues long: 2,3,4,5-tetrahydropyridine-2,6-dicarboxylate N-acetyltransferase (233 aa).

It belongs to the transferase hexapeptide repeat family. DapH subfamily.

It carries out the reaction (S)-2,3,4,5-tetrahydrodipicolinate + acetyl-CoA + H2O = L-2-acetamido-6-oxoheptanedioate + CoA. It participates in amino-acid biosynthesis; L-lysine biosynthesis via DAP pathway; LL-2,6-diaminopimelate from (S)-tetrahydrodipicolinate (acetylase route): step 1/3. Functionally, catalyzes the transfer of an acetyl group from acetyl-CoA to tetrahydrodipicolinate. In Thermotoga petrophila (strain ATCC BAA-488 / DSM 13995 / JCM 10881 / RKU-1), this protein is 2,3,4,5-tetrahydropyridine-2,6-dicarboxylate N-acetyltransferase.